We begin with the raw amino-acid sequence, 234 residues long: Leucyl/phenylalanyl-tRNA--protein transferase (234 aa).

This sequence belongs to the L/F-transferase family.

It localises to the cytoplasm. It carries out the reaction N-terminal L-lysyl-[protein] + L-leucyl-tRNA(Leu) = N-terminal L-leucyl-L-lysyl-[protein] + tRNA(Leu) + H(+). The enzyme catalyses N-terminal L-arginyl-[protein] + L-leucyl-tRNA(Leu) = N-terminal L-leucyl-L-arginyl-[protein] + tRNA(Leu) + H(+). The catalysed reaction is L-phenylalanyl-tRNA(Phe) + an N-terminal L-alpha-aminoacyl-[protein] = an N-terminal L-phenylalanyl-L-alpha-aminoacyl-[protein] + tRNA(Phe). Functions in the N-end rule pathway of protein degradation where it conjugates Leu, Phe and, less efficiently, Met from aminoacyl-tRNAs to the N-termini of proteins containing an N-terminal arginine or lysine. The chain is Leucyl/phenylalanyl-tRNA--protein transferase from Salmonella paratyphi A (strain ATCC 9150 / SARB42).